The chain runs to 477 residues: Bifunctional protein HldE (477 aa).

Residues 1–318 (MKVNLPAFER…ENAVRGRAAT (318 aa)) are ribokinase. 195-198 (NLSE) is an ATP binding site. The active site involves aspartate 264. Residues 344–477 (MTNGVFDILH…IKKIQTESEK (134 aa)) form a cytidylyltransferase region.

It in the N-terminal section; belongs to the carbohydrate kinase PfkB family. This sequence in the C-terminal section; belongs to the cytidylyltransferase family. In terms of assembly, homodimer.

It carries out the reaction D-glycero-beta-D-manno-heptose 7-phosphate + ATP = D-glycero-beta-D-manno-heptose 1,7-bisphosphate + ADP + H(+). It catalyses the reaction D-glycero-beta-D-manno-heptose 1-phosphate + ATP + H(+) = ADP-D-glycero-beta-D-manno-heptose + diphosphate. It functions in the pathway nucleotide-sugar biosynthesis; ADP-L-glycero-beta-D-manno-heptose biosynthesis; ADP-L-glycero-beta-D-manno-heptose from D-glycero-beta-D-manno-heptose 7-phosphate: step 1/4. It participates in nucleotide-sugar biosynthesis; ADP-L-glycero-beta-D-manno-heptose biosynthesis; ADP-L-glycero-beta-D-manno-heptose from D-glycero-beta-D-manno-heptose 7-phosphate: step 3/4. Catalyzes the phosphorylation of D-glycero-D-manno-heptose 7-phosphate at the C-1 position to selectively form D-glycero-beta-D-manno-heptose-1,7-bisphosphate. In terms of biological role, catalyzes the ADP transfer from ATP to D-glycero-beta-D-manno-heptose 1-phosphate, yielding ADP-D-glycero-beta-D-manno-heptose. The sequence is that of Bifunctional protein HldE from Salmonella arizonae (strain ATCC BAA-731 / CDC346-86 / RSK2980).